The following is a 523-amino-acid chain: Occludin (523 aa).

Residues 1 to 20 (MSVRPFESPPPYRPDEFKPN) are disordered. The Cytoplasmic portion of the chain corresponds to 1 to 66 (MSVRPFESPP…KWTSPPGVIR (66 aa)). The region spanning 60-269 (SPPGVIRILS…IIVFAVKTRR (210 aa)) is the MARVEL domain. The chain crosses the membrane as a helical span at residues 67–87 (ILSMLVIVMCIAVFACVASTL). At 88–140 (AWDRAYGTGIFGGSMNYPYGSGFGSYGGGFGGYGYGYGYGYGGYTDPRAAKGF) the chain is on the extracellular side. A helical transmembrane segment spans residues 141–161 (LLAMAAFCFIASLVIFVTSVI). At 162 to 173 (RSGMSRTRRYYL) the chain is on the cytoplasmic side. Residues 174 to 194 (IVIIVSAILGIMVFIATIVYI) form a helical membrane-spanning segment. At 195 to 244 (MGVNPTAQASGSMYGSQIYTICSQFYTPGGTGLYVDQYLYHYCVVDPQEA) the chain is on the extracellular side. Cysteines 216 and 237 form a disulfide. The helical transmembrane segment at 245 to 265 (IAIVLGFMIIVAFALIIVFAV) threads the bilayer. Residues 266 to 523 (KTRRKMDRYD…MVGDYDRRKT (258 aa)) are Cytoplasmic-facing. The residue at position 302 (S302) is a Phosphoserine. Residues 302-338 (SAGTQDMPPPPSDYAERVDSPMAYSSNGKVNGKRSYP) form a disordered region. T305 carries the post-translational modification Phosphothreonine. A phosphoserine mark is found at S313, S321, S340, and S360. Residues 363–408 (DFRQPRYSSNDNLETPSKRTPTKGKAGKAKRTDPDHYETDYTTGGE) form a disordered region. Over residues 368 to 381 (RYSSNDNLETPSKR) the composition is skewed to polar residues. Y369 is subject to Phosphotyrosine. A phosphoserine mark is found at S370 and S371. The span at 382–391 (TPTKGKAGKA) shows a compositional bias: basic residues. Basic and acidic residues predominate over residues 392 to 401 (KRTDPDHYET). A phosphotyrosine mark is found at Y399 and Y403. Phosphothreonine; by PKC/PRKCH is present on residues T404 and T405. Residue S409 is modified to Phosphoserine. The OCEL domain maps to 415 to 523 (EDWLREYPPI…MVGDYDRRKT (109 aa)). Residues 433–489 (YKRNFDAGLQEYKSLLAELDEVNKELSRLDRELDDYREESEEYMAAADEYNRLKQVK) are a coiled coil. S491 carries the post-translational modification Phosphoserine.

The protein belongs to the ELL/occludin family. In terms of assembly, interacts with TJP1/ZO1. Interacts with VAPA. Interacts with CLDN1, CLDN6, CLDN9, CLDN11, CLDN12 and CLDN17. Interacts with PLSCR1. Interacts with LSR, ILDR1 and ILDR2. Interacts with TJP2/ZO2. Post-translationally, dephosphorylated by PTPRJ.

It localises to the cell membrane. It is found in the cell junction. The protein resides in the tight junction. Its function is as follows. May play a role in the formation and regulation of the tight junction (TJ) paracellular permeability barrier. May be involved in the organization of actin in endothelial cells. The polypeptide is Occludin (Ocln) (Rattus norvegicus (Rat)).